A 338-amino-acid chain; its full sequence is MEMO1 family protein MHO1 (338 aa).

This sequence belongs to the MEMO1 family.

The protein resides in the cytoplasm. The protein localises to the nucleus. In terms of biological role, plays a role in haploid invasive growth under conditions of nutrient insufficiency, suggesting that the function of the MEMO1 family in cell motility/invasion is conserved across species. This chain is MEMO1 family protein MHO1, found in Saccharomyces cerevisiae (strain ATCC 204508 / S288c) (Baker's yeast).